We begin with the raw amino-acid sequence, 702 residues long: Polyphosphate kinase (702 aa).

ATP is bound at residue asparagine 55. Mg(2+) is bound by residues arginine 389 and arginine 419. Histidine 449 serves as the catalytic Phosphohistidine intermediate. Residues tyrosine 482, arginine 578, and histidine 606 each coordinate ATP.

Belongs to the polyphosphate kinase 1 (PPK1) family. Requires Mg(2+) as cofactor. In terms of processing, an intermediate of this reaction is the autophosphorylated ppk in which a phosphate is covalently linked to a histidine residue through a N-P bond.

The catalysed reaction is [phosphate](n) + ATP = [phosphate](n+1) + ADP. In terms of biological role, catalyzes the reversible transfer of the terminal phosphate of ATP to form a long-chain polyphosphate (polyP). In Bacillus anthracis, this protein is Polyphosphate kinase.